We begin with the raw amino-acid sequence, 577 residues long: Guanine nucleotide-binding protein-like 3-like protein (577 aa).

Over residues 1–30 (MMKIRHKNKKPGKGSKGCKKPARQNGKKVT) the composition is skewed to basic residues. The interval 1-75 (MMKIRHKNKK…VAREQERQRH (75 aa)) is disordered. The segment at 9 to 28 (KKPGKGSKGCKKPARQNGKK) is required for nucleolar localization. Residues 42 to 75 (GNDHASREAELKKKRVEEMREKQQVAREQERQRH) show a composition bias toward basic and acidic residues. A coiled-coil region spans residues 43–103 (NDHASREAEL…QKEEVLQELN (61 aa)). Residues 118 to 304 (YKEFRKVVEY…LLDAPGIVPG (187 aa)) enclose the CP-type G domain. GTP-binding positions include 166-169 (NKID), 253-260 (GLPNVGKS), and 297-300 (DAPG).

The protein belongs to the TRAFAC class YlqF/YawG GTPase family. Interacts with MDM2; this interaction, which occurs in the nucleoplasm, stabilizes MDM2. Indirectly interacts with TP53, via MDM2-binding. Interacts with TERF1; this interaction probably occurs in the nucleoplasm and is increased during mitosis, when the nucleolus is disassembled. This binding may promote TERF1 homodimerization. Interacts with TERT.

It localises to the nucleus. The protein resides in the nucleolus. Functionally, stabilizes TERF1 telomeric association by preventing TERF1 recruitment by PML. Stabilizes TERF1 protein by preventing its ubiquitination and hence proteasomal degradation. Does so by interfering with TERF1-binding to FBXO4 E3 ubiquitin-protein ligase. Required for cell proliferation. By stabilizing TRF1 protein during mitosis, promotes metaphase-to-anaphase transition. Stabilizes MDM2 protein by preventing its ubiquitination, and hence proteasomal degradation. By acting on MDM2, may affect TP53 activity. Required for normal processing of ribosomal pre-rRNA. Binds GTP. This is Guanine nucleotide-binding protein-like 3-like protein (Gnl3l) from Mus musculus (Mouse).